We begin with the raw amino-acid sequence, 238 residues long: 2-phytyl-1,4-naphtoquinone methyltransferase (238 aa).

It belongs to the class I-like SAM-binding methyltransferase superfamily. MenG/UbiE family.

The catalysed reaction is demethylphylloquinol + S-adenosyl-L-methionine = phylloquinol + S-adenosyl-L-homocysteine + H(+). Its pathway is cofactor biosynthesis; phylloquinone biosynthesis. Methyltransferase required for the conversion of 2-phytyl-1,4-beta-naphthoquinol to phylloquinol. The protein is 2-phytyl-1,4-naphtoquinone methyltransferase of Synechocystis sp. (strain ATCC 27184 / PCC 6803 / Kazusa).